The chain runs to 436 residues: Fasciclin-like arabinogalactan protein 15 (436 aa).

A signal peptide spans 1-20 (MDDLSKLLFFLLLTISITTA). FAS1 domains follow at residues 31–165 (NSNS…ERLL) and 249–392 (VKDF…DGVL). Residues Asn-68 and Asn-271 are each glycosylated (N-linked (GlcNAc...) asparagine).

This sequence belongs to the fasciclin-like AGP family.

The protein localises to the secreted. In terms of biological role, may be a cell surface adhesion protein. In Arabidopsis thaliana (Mouse-ear cress), this protein is Fasciclin-like arabinogalactan protein 15 (FLA15).